We begin with the raw amino-acid sequence, 256 residues long: Imidazole glycerol phosphate synthase subunit HisF (256 aa).

Active-site residues include Asp-12 and Asp-131.

It belongs to the HisA/HisF family. As to quaternary structure, heterodimer of HisH and HisF.

The protein resides in the cytoplasm. The catalysed reaction is 5-[(5-phospho-1-deoxy-D-ribulos-1-ylimino)methylamino]-1-(5-phospho-beta-D-ribosyl)imidazole-4-carboxamide + L-glutamine = D-erythro-1-(imidazol-4-yl)glycerol 3-phosphate + 5-amino-1-(5-phospho-beta-D-ribosyl)imidazole-4-carboxamide + L-glutamate + H(+). It participates in amino-acid biosynthesis; L-histidine biosynthesis; L-histidine from 5-phospho-alpha-D-ribose 1-diphosphate: step 5/9. Functionally, IGPS catalyzes the conversion of PRFAR and glutamine to IGP, AICAR and glutamate. The HisF subunit catalyzes the cyclization activity that produces IGP and AICAR from PRFAR using the ammonia provided by the HisH subunit. The protein is Imidazole glycerol phosphate synthase subunit HisF of Pseudomonas putida (strain GB-1).